The sequence spans 139 residues: Large ribosomal subunit protein uL16 (139 aa).

The disordered stretch occupies residues 1-21; it reads MLMPKRVQYRKTQRGRMKGNA. Positions 7–17 are enriched in basic residues; that stretch reads VQYRKTQRGRM.

Belongs to the universal ribosomal protein uL16 family. As to quaternary structure, part of the 50S ribosomal subunit.

In terms of biological role, binds 23S rRNA and is also seen to make contacts with the A and possibly P site tRNAs. The sequence is that of Large ribosomal subunit protein uL16 from Chlorobaculum tepidum (strain ATCC 49652 / DSM 12025 / NBRC 103806 / TLS) (Chlorobium tepidum).